A 651-amino-acid polypeptide reads, in one-letter code: Cytoplasmic tyrosine-protein kinase BMX (651 aa).

One can recognise a PH domain in the interval 4 to 111 (KSILEELLLK…WLKALQKEIR (108 aa)). The Btk-type zinc finger occupies 113 to 149 (NPHLLIKYHSGFFVDGKFLCCQQSCKAAPGCTLWEAY). Positions 121, 132, 133, and 143 each coordinate Zn(2+). Positions 272-368 (WFAGNISRSQ…GMITRLRHPV (97 aa)) constitute an SH2 domain. A Protein kinase domain is found at 393-646 (ITLLKELGNG…QLLSAIEPLR (254 aa)). ATP is bound by residues 399 to 407 (LGNGQFGVV) and Lys-421. The active-site Proton acceptor is Asp-512. Phosphotyrosine; by SRC and autocatalysis is present on Tyr-542.

This sequence belongs to the protein kinase superfamily. Tyr protein kinase family. TEC subfamily. As to quaternary structure, interacts with BCAR1, CAV1, MYD88, PTK2/FAK1, RUFY1, RUFY2, STAT3, TIRAP and TNFRSF1B. Zn(2+) is required as a cofactor. In terms of processing, phosphorylated in response to protein I/II and to LPS. Phosphorylation at Tyr-542 by SRC and by autocatalysis leads to activation and is required for STAT3 phosphorylation by BMX. In terms of tissue distribution, specifically expressed in the endocardium of the developing heart as well as in the endocardium of the left ventricle and in the endothelium of large arteries in adult mice.

Its subcellular location is the cytoplasm. The enzyme catalyses L-tyrosyl-[protein] + ATP = O-phospho-L-tyrosyl-[protein] + ADP + H(+). TEK and vascular endothelial growth factor receptor 1 (FLT1) stimulate BMX tyrosine kinase activity. Activated by integrins through the mediation of PTK2/FAK1. Activated by TNF through the mediation of TNFRSF1B. Its function is as follows. Non-receptor tyrosine kinase that plays central but diverse modulatory roles in various signaling processes involved in the regulation of actin reorganization, cell migration, cell proliferation and survival, cell adhesion, and apoptosis. Participates in signal transduction stimulated by growth factor receptors, cytokine receptors, G-protein coupled receptors, antigen receptors and integrins. Induces tyrosine phosphorylation of BCAR1 in response to integrin regulation. Activation of BMX by integrins is mediated by PTK2/FAK1, a key mediator of integrin signaling events leading to the regulation of actin cytoskeleton and cell motility. Plays a critical role in TNF-induced angiogenesis, and implicated in the signaling of TEK and FLT1 receptors, 2 important receptor families essential for angiogenesis. Required for the phosphorylation and activation of STAT3, a transcription factor involved in cell differentiation. Also involved in interleukin-6 (IL6) induced differentiation. Also plays a role in programming adaptive cytoprotection against extracellular stress in different cell systems, salivary epithelial cells, brain endothelial cells, and dermal fibroblasts. May be involved in regulation of endocytosis through its interaction with an endosomal protein RUFY1. May also play a role in the growth and differentiation of hematopoietic cells; as well as in signal transduction in endocardial and arterial endothelial cells. In Mus musculus (Mouse), this protein is Cytoplasmic tyrosine-protein kinase BMX (Bmx).